We begin with the raw amino-acid sequence, 265 residues long: PBSX phage terminase small subunit (265 aa).

The interval Lys241–Ser265 is disordered.

To B.subtilis YqaS and B.subtilis phage SPP1 terminase small subunit. As to quaternary structure, dimer of a small and a large subunit.

In terms of biological role, functions as a terminase. The chain is PBSX phage terminase small subunit (xtmA) from Bacillus subtilis (strain 168).